The chain runs to 428 residues: Divergent protein kinase domain 1A (428 aa).

Topologically, residues M1–K27 are cytoplasmic. Residues Y28–S48 traverse the membrane as a helical segment. Residues T49–S428 are Lumenal-facing.

The protein belongs to the DIPK family. In terms of processing, among the many cysteines in the lumenal domain, most are probably involved in disulfide bonds.

It is found in the endoplasmic reticulum membrane. The chain is Divergent protein kinase domain 1A (dipk1a) from Danio rerio (Zebrafish).